The chain runs to 715 residues: Polyribonucleotide nucleotidyltransferase (715 aa).

2 residues coordinate Mg(2+): Asp-487 and Asp-493. The region spanning 554-613 is the KH domain; the sequence is PRLYTFKINPEKIRDVIGKGGAVIRALTEETGTTIDIQDDGTITIAATSGEAAAAARSRI. An S1 motif domain is found at 623–691; the sequence is GKIYEGTVLK…DRGRVKLSMK (69 aa).

The protein belongs to the polyribonucleotide nucleotidyltransferase family. It depends on Mg(2+) as a cofactor.

It localises to the cytoplasm. The enzyme catalyses RNA(n+1) + phosphate = RNA(n) + a ribonucleoside 5'-diphosphate. In terms of biological role, involved in mRNA degradation. Catalyzes the phosphorolysis of single-stranded polyribonucleotides processively in the 3'- to 5'-direction. This is Polyribonucleotide nucleotidyltransferase from Dechloromonas aromatica (strain RCB).